A 210-amino-acid polypeptide reads, in one-letter code: Superoxide dismutase [Mn], mitochondrial (210 aa).

Residues His-29, His-77, Asp-164, and His-168 each coordinate Mn(2+).

Belongs to the iron/manganese superoxide dismutase family. In terms of assembly, homotetramer. Requires Mn(2+) as cofactor.

It is found in the mitochondrion matrix. The enzyme catalyses 2 superoxide + 2 H(+) = H2O2 + O2. Functionally, destroys superoxide anion radicals which are normally produced within the cells and which are toxic to biological systems. This Aspergillus niger protein is Superoxide dismutase [Mn], mitochondrial (sodB).